Consider the following 452-residue polypeptide: Elongation factor Tu, mitochondrial (452 aa).

The transit peptide at 1–43 directs the protein to the mitochondrion; it reads MAAATLLRATPRFSGLCASPTPFLQGRLRPLKAPASPFLCRGL. Residues 55 to 251 form the tr-type G domain; it reads KPHVNVGTIG…AVDTYIPVPT (197 aa). The segment at 64 to 71 is G1; it reads GHVDHGKT. Positions 67, 69, 70, 71, and 72 each coordinate GTP. Thr-71 is a binding site for Mg(2+). N6-acetyllysine is present on Lys-79. Position 88 is an N6-acetyllysine; alternate (Lys-88). Lys-88 bears the N6-succinyllysine; alternate mark. Positions 105-109 are G2; sequence GITIN. The G3 stretch occupies residues 126-129; that stretch reads DCPG. Positions 181, 184, 219, 220, and 221 each coordinate GTP. The G4 stretch occupies residues 181–184; the sequence is NKAD. Positions 219–221 are G5; it reads SAL. Position 234 is an N6-succinyllysine (Lys-234). An N6-acetyllysine modification is found at Lys-256. At Thr-278 the chain carries Phosphothreonine. The residue at position 286 (Lys-286) is an N6-succinyllysine. Ser-312 carries the post-translational modification Phosphoserine. Lys-361 and Lys-418 each carry N6-acetyllysine.

It belongs to the TRAFAC class translation factor GTPase superfamily. Classic translation factor GTPase family. EF-Tu/EF-1A subfamily. Interacts with NLRX1. Interacts with ATG16L1.

Its subcellular location is the mitochondrion. It carries out the reaction GTP + H2O = GDP + phosphate + H(+). Functionally, GTP hydrolase that promotes the GTP-dependent binding of aminoacyl-tRNA to the A-site of ribosomes during protein biosynthesis. Plays a role in the regulation of autophagy and innate immunity. Recruits ATG5-ATG12 and NLRX1 at mitochondria and serves as a checkpoint of the RIGI-MAVS pathway. In turn, inhibits RLR-mediated type I interferon while promoting autophagy. The sequence is that of Elongation factor Tu, mitochondrial from Rattus norvegicus (Rat).